A 1345-amino-acid polypeptide reads, in one-letter code: DNA-directed RNA polymerase subunit beta' (1345 aa).

Cys60, Cys62, Cys75, and Cys78 together coordinate Zn(2+). 3 residues coordinate Mg(2+): Asp536, Asp538, and Asp540. Residues Cys895, Cys974, Cys981, and Cys984 each coordinate Zn(2+).

This sequence belongs to the RNA polymerase beta' chain family. As to quaternary structure, the RNAP catalytic core consists of 2 alpha, 1 beta, 1 beta' and 1 omega subunit. When a sigma factor is associated with the core the holoenzyme is formed, which can initiate transcription. Requires Mg(2+) as cofactor. It depends on Zn(2+) as a cofactor.

It catalyses the reaction RNA(n) + a ribonucleoside 5'-triphosphate = RNA(n+1) + diphosphate. Functionally, DNA-dependent RNA polymerase catalyzes the transcription of DNA into RNA using the four ribonucleoside triphosphates as substrates. In Bifidobacterium longum (strain DJO10A), this protein is DNA-directed RNA polymerase subunit beta'.